A 191-amino-acid chain; its full sequence is Endoribonuclease YbeY (191 aa).

Zn(2+) is bound by residues His122, His126, and His132. The interval 164–191 (QPKPSGPKAFPDAAERAELDKEVPGGGI) is disordered. A compositionally biased stretch (basic and acidic residues) spans 176-191 (AAERAELDKEVPGGGI).

This sequence belongs to the endoribonuclease YbeY family. Zn(2+) serves as cofactor.

The protein localises to the cytoplasm. In terms of biological role, single strand-specific metallo-endoribonuclease involved in late-stage 70S ribosome quality control and in maturation of the 3' terminus of the 16S rRNA. The sequence is that of Endoribonuclease YbeY from Corynebacterium aurimucosum (strain ATCC 700975 / DSM 44827 / CIP 107346 / CN-1) (Corynebacterium nigricans).